The primary structure comprises 442 residues: Betaine reductase complex component B subunit alpha (442 aa).

In terms of assembly, heterotetramer of two alpha and two beta subunits. Component of the betaine reductase complex, together with components A and C. PB is substrate specific.

The enzyme catalyses acetyl phosphate + trimethylamine + [thioredoxin]-disulfide + H2O = glycine betaine + [thioredoxin]-dithiol + phosphate + H(+). Its function is as follows. In the first step of betaine reductase, the substrate is bound to component PB via a Schiff base intermediate. Then the PB-activated substrate is nucleophilically attacked by the selenol anion of component PA to transform it to a carboxymethylated selenoether and the respective amine. By action of component PC, acetyl phosphate is formed, leaving component PA in its oxidized state. Finally component PA becomes reduced by the thioredoxin system to start a new catalytic cycle of reductive deamination. This is Betaine reductase complex component B subunit alpha (grdI) from Peptoclostridium acidaminophilum (Eubacterium acidaminophilum).